Here is a 1181-residue protein sequence, read N- to C-terminus: Lysine-specific demethylase hairless (1181 aa).

Positions 311–323 are enriched in pro residues; that stretch reads TPRCPSPGPPTPP. 3 disordered regions span residues 311 to 378, 413 to 472, and 509 to 543; these read TPRC…HTKL, AGSP…DGRI, and SHSQKSHKLPLEEKPLEEDSCATSEEGGGSSPEAS. A compositionally biased stretch (low complexity) spans 347–357; that stretch reads SPEGSSSGPGE. The span at 447–461 shows a compositional bias: polar residues; it reads TPETSTGSKAEAQQQ. Residues 462–472 are compositionally biased toward basic and acidic residues; it reads EEQRGPRDGRI. The LXXLL motif 1 signature appears at 560–564; sequence LCRLL. The segment at 594–619 adopts a C6-type zinc-finger fold; that stretch reads CSRCHHGLFNTHWRCSHCSHRLCVAC. A disordered region spans residues 696 to 745; the sequence is GDGGQQKEPTEKTPPAPQLSCNGDSNRTKDIKEETPDSTESPAEDRAGRS. A compositionally biased stretch (basic and acidic residues) spans 721 to 730; the sequence is NRTKDIKEET. Residues 752 to 756 carry the LXXLL motif 2 motif; sequence LCELL. A JmjC domain is found at 938 to 1149; the sequence is DESRVENLAS…LSAQLCHQGA (212 aa). Residues Cys-999, Glu-1001, and His-1117 each contribute to the Fe cation site.

The cofactor is Fe(2+).

It is found in the nucleus. The enzyme catalyses N(6),N(6)-dimethyl-L-lysyl(9)-[histone H3] + 2 2-oxoglutarate + 2 O2 = L-lysyl(9)-[histone H3] + 2 formaldehyde + 2 succinate + 2 CO2. In terms of biological role, histone demethylase that specifically demethylates both mono- and dimethylated 'Lys-9' of histone H3. May act as a transcription regulator controlling hair biology (via targeting of collagens), neural activity, and cell cycle. The chain is Lysine-specific demethylase hairless (Hr) from Rattus norvegicus (Rat).